The following is a 104-amino-acid chain: Integration host factor subunit alpha (104 aa).

The protein belongs to the bacterial histone-like protein family. As to quaternary structure, heterodimer of an alpha and a beta chain.

This protein is one of the two subunits of integration host factor, a specific DNA-binding protein that functions in genetic recombination as well as in transcriptional and translational control. The polypeptide is Integration host factor subunit alpha (Bartonella quintana (strain Toulouse) (Rochalimaea quintana)).